The chain runs to 491 residues: Peptidoglycan D,D-transpeptidase PbpA (491 aa).

At 1 to 7 the chain is on the cytoplasmic side; sequence MNASLRR. Residues 8–28 form a helical; Signal-anchor for type II membrane protein membrane-spanning segment; it reads ISVTVMALIVLLLLNATMTQV. At 29–491 the chain is on the periplasmic side; the sequence is FTADGLRADP…VIEAALQGEP (463 aa). The interval 160-484 is transpeptidase; that stretch reads GAVVALEPST…AAPIGRAVIE (325 aa). Catalysis depends on serine 222, which acts as the Acyl-ester intermediate.

Belongs to the transpeptidase family.

It localises to the cell inner membrane. The catalysed reaction is Preferential cleavage: (Ac)2-L-Lys-D-Ala-|-D-Ala. Also transpeptidation of peptidyl-alanyl moieties that are N-acyl substituents of D-alanine.. The protein operates within cell wall biogenesis; peptidoglycan biosynthesis. Its function is as follows. Transpeptidase that catalyzes cross-linking of the peptidoglycan cell wall. Required for the regulation of cell length. In Mycobacterium tuberculosis (strain CDC 1551 / Oshkosh), this protein is Peptidoglycan D,D-transpeptidase PbpA (pbpA).